The following is a 348-amino-acid chain: Dihydroorotase (348 aa).

Zn(2+)-binding residues include His-17 and His-19. Substrate contacts are provided by residues 19–21 (HLR) and Asn-45. Zn(2+)-binding residues include Lys-103, His-140, and His-178. At Lys-103 the chain carries N6-carboxylysine. Substrate is bound at residue His-140. Leu-223 contacts substrate. Residue Asp-251 participates in Zn(2+) binding. Residue Asp-251 is part of the active site. His-255 and Ala-267 together coordinate substrate.

It belongs to the metallo-dependent hydrolases superfamily. DHOase family. Class II DHOase subfamily. In terms of assembly, homodimer. It depends on Zn(2+) as a cofactor. Co(2+) is required as a cofactor. The cofactor is Mg(2+). Ni(2+) serves as cofactor.

The enzyme catalyses (S)-dihydroorotate + H2O = N-carbamoyl-L-aspartate + H(+). It functions in the pathway pyrimidine metabolism; UMP biosynthesis via de novo pathway; (S)-dihydroorotate from bicarbonate: step 3/3. Catalyzes the reversible cyclization of carbamoyl aspartate to dihydroorotate. This Klebsiella pneumoniae subsp. pneumoniae (strain ATCC 700721 / MGH 78578) protein is Dihydroorotase.